The chain runs to 143 residues: Endoribonuclease YbeY (143 aa).

Zn(2+) contacts are provided by histidine 109, histidine 113, and histidine 119.

Belongs to the endoribonuclease YbeY family. Zn(2+) serves as cofactor.

Its subcellular location is the cytoplasm. Functionally, single strand-specific metallo-endoribonuclease involved in late-stage 70S ribosome quality control and in maturation of the 3' terminus of the 16S rRNA. This is Endoribonuclease YbeY from Leptospira borgpetersenii serovar Hardjo-bovis (strain JB197).